A 698-amino-acid polypeptide reads, in one-letter code: Macrophomene synthase (698 aa).

The tract at residues 21-340 (MEYMYSVPLD…SCDRYSSYRR (320 aa)) is terpene cyclase. Mg(2+) is bound at residue aspartate 113. Positions 113 to 117 (DNIAE) match the DDXXD 1 motif. The NSE/DTE signature appears at 242–250 (NDFFSFNYE). Positions 341 to 696 (EKHQMELPIR…IQLALERLRI (356 aa)) are prenyltransferase. The disordered stretch occupies residues 368–387 (LPNGKQLDAPTESSGKDLSD). Positions 417, 420, and 449 each coordinate isopentenyl diphosphate. Mg(2+)-binding residues include aspartate 456 and aspartate 460. The DDXXD 2 signature appears at 456-460 (DDIED). Position 465 (arginine 465) interacts with dimethylallyl diphosphate. Arginine 466 serves as a coordination point for isopentenyl diphosphate. 6 residues coordinate dimethylallyl diphosphate: lysine 543, threonine 544, glutamine 579, asparagine 586, lysine 596, and lysine 606.

It in the N-terminal section; belongs to the terpene synthase family. The protein in the C-terminal section; belongs to the FPP/GGPP synthase family. Hexamer. Mg(2+) serves as cofactor.

It carries out the reaction 5 isopentenyl diphosphate + dimethylallyl diphosphate = all-trans-hexaprenyl diphosphate + 5 diphosphate. It catalyses the reaction all-trans-hexaprenyl diphosphate = macrophomene + diphosphate. In terms of biological role, bifunctional terpene synthase that converts dimethylallyl diphosphate (DMAPP) and isopentenyl diphosphate (IPP) into macrophomene as a single product. The C-terminal prenyltransferase (PT) domain of MpMS catalyzes formation of hexaprenyl diphosphate (HexPP), whereas the N-terminal terpene cyclase (TC) domain catalyzes the cyclization of HexPP to macrophomene. This chain is Macrophomene synthase, found in Macrophomina phaseolina (strain MS6) (Charcoal rot fungus).